The primary structure comprises 228 residues: F-box protein At5g67140 (228 aa).

One can recognise an F-box domain in the interval 4–51; it reads EAAIDRLPLDLLAYIFSLATSFTVLAQASGVCKKWRKAVNQSMARRET.

This is F-box protein At5g67140 from Arabidopsis thaliana (Mouse-ear cress).